The following is a 193-amino-acid chain: Imidazoleglycerol-phosphate dehydratase (193 aa).

The protein belongs to the imidazoleglycerol-phosphate dehydratase family.

It is found in the cytoplasm. The enzyme catalyses D-erythro-1-(imidazol-4-yl)glycerol 3-phosphate = 3-(imidazol-4-yl)-2-oxopropyl phosphate + H2O. It participates in amino-acid biosynthesis; L-histidine biosynthesis; L-histidine from 5-phospho-alpha-D-ribose 1-diphosphate: step 6/9. This chain is Imidazoleglycerol-phosphate dehydratase, found in Metallosphaera sedula (strain ATCC 51363 / DSM 5348 / JCM 9185 / NBRC 15509 / TH2).